The primary structure comprises 514 residues: HERV-H LTR-associating protein 1 homolog (514 aa).

The signal sequence occupies residues 1-29; sequence MQSFLLHCPPIRLCMGLACILFLWNAVSG. N-linked (GlcNAc...) asparagine glycosylation is found at asparagine 58, asparagine 97, asparagine 139, asparagine 161, asparagine 179, asparagine 200, asparagine 217, asparagine 232, and asparagine 321. The interval 379 to 420 is disordered; it reads LHPTGILTTPSRLAQPSRASGTLMPGTQTTNPTQAPAPRVPQ. Residues 384–398 show a composition bias toward polar residues; it reads ILTTPSRLAQPSRAS. Over residues 403–415 the composition is skewed to low complexity; it reads PGTQTTNPTQAPA.

The protein resides in the secreted. The chain is HERV-H LTR-associating protein 1 homolog (Hhla1) from Mus musculus (Mouse).